Consider the following 305-residue polypeptide: tRNA pseudouridine synthase B (305 aa).

Asp-48 (nucleophile) is an active-site residue.

The protein belongs to the pseudouridine synthase TruB family. Type 1 subfamily.

The enzyme catalyses uridine(55) in tRNA = pseudouridine(55) in tRNA. In terms of biological role, responsible for synthesis of pseudouridine from uracil-55 in the psi GC loop of transfer RNAs. This Pseudomonas fluorescens (strain Pf0-1) protein is tRNA pseudouridine synthase B.